The sequence spans 240 residues: MORN repeat-containing protein 3 (240 aa).

The segment at 6-35 (CPKKSESLWKGWDRKAQRNGLRSQVYAVNG) is interaction with MDM2. MORN repeat units follow at residues 38 to 60 (YVGEWKDNVKHGKGTQVWKKKGA), 62 to 84 (YEGDWKFGKRDGYGTLSLPDQQT), 91 to 113 (YSGWWKGDKKSGYGIQFFGPKEY), 114 to 136 (YEGDWCGSQRSGWGRMYYSNGDI), 137 to 159 (YEGQWENDKPNGEGMLRLKNGNR), 160 to 182 (YEGCWERGMKNGAGRFFHLDHGQ), and 184 to 205 (FEGFWVDNMAKCGTMIDFGRDE). An interaction with SIRT1 region spans residues 76–100 (TLSLPDQQTGKCRRVYSGWWKGDKK). The interval 206–240 (APEPTQFPIPEVKILDPDGVLAEALAMFRKTEEGD) is interaction with TP53.

As to quaternary structure, interacts with MEIG1. Interacts with TP53, MDM2 and SIRT1; the interactions mediate post-transcriptional modifications of TP53 by MDM2 and SIRT1.

It localises to the cytoplasmic vesicle. The protein resides in the secretory vesicle. The protein localises to the acrosome. Assembles a suppression complex (suppresome) by tethering SIRT1 and MDM2 to regulate composite modifications of p53/TP53. Confers both deacetylation-mediated functional inactivation, by SIRT1, and ubiquitination-dependent degradation, by MDM2, of p53/TP53, promoting a proliferative and cell survival behaviors. May play a role in the regulation of spermatogenesis. The chain is MORN repeat-containing protein 3 from Homo sapiens (Human).